A 215-amino-acid polypeptide reads, in one-letter code: High frequency lysogenization protein HflD homolog (215 aa).

Belongs to the HflD family.

The protein localises to the cytoplasm. The protein resides in the cell inner membrane. This Haemophilus ducreyi (strain 35000HP / ATCC 700724) protein is High frequency lysogenization protein HflD homolog.